The following is a 419-amino-acid chain: uncharacterized protein (419 aa).

13 consecutive transmembrane segments (helical) span residues M5 to I25, A26 to I46, F53 to L73, V102 to I122, V144 to V164, F170 to F190, A210 to L230, L234 to L254, A274 to F294, I309 to P329, M332 to L352, M360 to I380, and L396 to L416.

It belongs to the YiaN/YgiK family.

Its subcellular location is the cell inner membrane. This is an uncharacterized protein from Sinorhizobium fredii (strain NBRC 101917 / NGR234).